Here is a 507-residue protein sequence, read N- to C-terminus: UDP-N-acetylhexosamine pyrophosphorylase-like protein 1 (507 aa).

The short motif at 111–114 is the Substrate binding element; that stretch reads LAGG. UTP is bound by residues 111–114, lysine 125, glutamine 199, and glycine 225; that span reads LAGG. Asparagine 226 serves as a coordination point for substrate. Aspartate 256 serves as a coordination point for UTP. A Substrate binding motif is present at residues 306-307; that stretch reads EY. Position 380 (lysine 380) interacts with UTP. Lysine 410 contacts substrate.

Belongs to the UDPGP type 1 family.

This is UDP-N-acetylhexosamine pyrophosphorylase-like protein 1 (Uap1l1) from Mus musculus (Mouse).